We begin with the raw amino-acid sequence, 326 residues long: Thiazole synthase (326 aa).

Lysine 168 functions as the Schiff-base intermediate with DXP in the catalytic mechanism. 1-deoxy-D-xylulose 5-phosphate is bound by residues glycine 229, 255–256 (AG), and 277–278 (NT).

Belongs to the ThiG family. Homotetramer. Forms heterodimers with either ThiH or ThiS.

The protein localises to the cytoplasm. It catalyses the reaction [ThiS sulfur-carrier protein]-C-terminal-Gly-aminoethanethioate + 2-iminoacetate + 1-deoxy-D-xylulose 5-phosphate = [ThiS sulfur-carrier protein]-C-terminal Gly-Gly + 2-[(2R,5Z)-2-carboxy-4-methylthiazol-5(2H)-ylidene]ethyl phosphate + 2 H2O + H(+). Its pathway is cofactor biosynthesis; thiamine diphosphate biosynthesis. Functionally, catalyzes the rearrangement of 1-deoxy-D-xylulose 5-phosphate (DXP) to produce the thiazole phosphate moiety of thiamine. Sulfur is provided by the thiocarboxylate moiety of the carrier protein ThiS. In vitro, sulfur can be provided by H(2)S. The sequence is that of Thiazole synthase from Magnetococcus marinus (strain ATCC BAA-1437 / JCM 17883 / MC-1).